The chain runs to 62 residues: Photosystem II reaction center protein Z (62 aa).

A run of 2 helical transmembrane segments spans residues 8–28 (TMFA…ITFA) and 41–61 (FSGV…NSFI).

The protein belongs to the PsbZ family. PSII is composed of 1 copy each of membrane proteins PsbA, PsbB, PsbC, PsbD, PsbE, PsbF, PsbH, PsbI, PsbJ, PsbK, PsbL, PsbM, PsbT, PsbY, PsbZ, Psb30/Ycf12, at least 3 peripheral proteins of the oxygen-evolving complex and a large number of cofactors. It forms dimeric complexes.

It is found in the plastid. It localises to the chloroplast thylakoid membrane. In terms of biological role, may control the interaction of photosystem II (PSII) cores with the light-harvesting antenna, regulates electron flow through the 2 photosystem reaction centers. PSII is a light-driven water plastoquinone oxidoreductase, using light energy to abstract electrons from H(2)O, generating a proton gradient subsequently used for ATP formation. This chain is Photosystem II reaction center protein Z, found in Welwitschia mirabilis (Tree tumbo).